A 199-amino-acid chain; its full sequence is uncharacterized protein (199 aa).

The chain crosses the membrane as a helical span at residues 21-38 (ISPSATNFIVSLVIMILI).

It is found in the membrane. This is an uncharacterized protein from Saccharomyces cerevisiae (strain ATCC 204508 / S288c) (Baker's yeast).